The chain runs to 1637 residues: Probable serine/threonine-protein kinase gdt2 (1637 aa).

The N-terminal stretch at Met-1–Thr-19 is a signal peptide. Residues Phe-20–Pro-896 lie on the Extracellular side of the membrane. The helical transmembrane segment at Ile-897–Gly-917 threads the bilayer. The Cytoplasmic segment spans residues Ala-918 to Asn-1637. Positions Ser-977–Pro-990 are enriched in polar residues. The disordered stretch occupies residues Ser-977–Thr-1000. Low complexity predominate over residues Thr-991–Thr-1000. A Protein kinase domain is found at Ile-1290–Lys-1547. ATP is bound by residues Ile-1296 to Val-1304 and Lys-1317. Asp-1408 serves as the catalytic Proton acceptor. The disordered stretch occupies residues Asp-1557–Asn-1637. 2 stretches are compositionally biased toward low complexity: residues Asn-1568–Asn-1589 and Asn-1597–Asn-1637.

In the N-terminal section; belongs to the GDT family. This sequence in the C-terminal section; belongs to the protein kinase superfamily. TKL Ser/Thr protein kinase family.

The protein localises to the membrane. The catalysed reaction is L-seryl-[protein] + ATP = O-phospho-L-seryl-[protein] + ADP + H(+). It carries out the reaction L-threonyl-[protein] + ATP = O-phospho-L-threonyl-[protein] + ADP + H(+). Regulates the transition between growth and differentiation. This is Probable serine/threonine-protein kinase gdt2 (gdt2) from Dictyostelium discoideum (Social amoeba).